The primary structure comprises 344 residues: Putative voltage-gated potassium channel subunit beta (344 aa).

NADP(+) is bound by residues W33, D62, Y67, S167, Q193, W222, S223, P224, L225, K233, R243, G301, S303, Q307, E310, and N311. Y67 functions as the Proton donor/acceptor in the catalytic mechanism.

This sequence belongs to the shaker potassium channel beta subunit family. Forms heteromultimeric complexes with potassium channel alpha subunits.

The protein resides in the cytoplasm. Its subcellular location is the nucleus. In terms of biological role, probable accessory potassium channel protein which modulates the activity of the pore-forming alpha subunit. The chain is Putative voltage-gated potassium channel subunit beta from Schizosaccharomyces pombe (strain 972 / ATCC 24843) (Fission yeast).